Consider the following 179-residue polypeptide: MLRLAIPLFLFALCSFTLFSSARSFITTKPLPIDSFIPKPKLENAAACSYTVIIKTSCSSVSYTRDKISISFGDVYGNEVYVKRLDDPSSRTFEKCSSDTYKISGPCMRDVCYLYLLRQGSDGWKPENVKIYGSSIRSVTFYYNLFLPNSVWYGFNVCNGIGNTKSSQPISTTSSVAAM.

A signal peptide spans 1-22 (MLRLAIPLFLFALCSFTLFSSA). The PLAT domain maps to 48 to 158 (CSYTVIIKTS…NSVWYGFNVC (111 aa)).

In terms of assembly, interacts with EULS3 (via N-terminus). Expressed in roots, rosette leaves, stems, cauline leaves and flowers.

The protein resides in the secreted. Its function is as follows. May play a role during embryo development. This Arabidopsis thaliana (Mouse-ear cress) protein is Embryo-specific protein ATS3A.